The chain runs to 173 residues: Ribosome maturation factor RimP (173 aa).

The protein belongs to the RimP family.

It is found in the cytoplasm. Functionally, required for maturation of 30S ribosomal subunits. The protein is Ribosome maturation factor RimP of Pelodictyon phaeoclathratiforme (strain DSM 5477 / BU-1).